Reading from the N-terminus, the 579-residue chain is Aspartate--tRNA(Asp/Asn) ligase (579 aa).

An L-aspartate-binding site is contributed by E171. The interval 195–198 is aspartate; it reads QLFK. Residue R217 coordinates L-aspartate. Residues 217–219 and Q226 contribute to the ATP site; that span reads RDE. Residue H444 participates in L-aspartate binding. E475 provides a ligand contact to ATP. R482 lines the L-aspartate pocket. 527 to 530 provides a ligand contact to ATP; the sequence is GLDR.

Belongs to the class-II aminoacyl-tRNA synthetase family. Type 1 subfamily. As to quaternary structure, homodimer.

It is found in the cytoplasm. It carries out the reaction tRNA(Asx) + L-aspartate + ATP = L-aspartyl-tRNA(Asx) + AMP + diphosphate. In terms of biological role, aspartyl-tRNA synthetase with relaxed tRNA specificity since it is able to aspartylate not only its cognate tRNA(Asp) but also tRNA(Asn). Reaction proceeds in two steps: L-aspartate is first activated by ATP to form Asp-AMP and then transferred to the acceptor end of tRNA(Asp/Asn). The sequence is that of Aspartate--tRNA(Asp/Asn) ligase from Thermotoga neapolitana (strain ATCC 49049 / DSM 4359 / NBRC 107923 / NS-E).